Consider the following 294-residue polypeptide: tRNA dimethylallyltransferase (294 aa).

Residue 10-17 (GPTAVGKT) participates in ATP binding. Residue 12-17 (TAVGKT) participates in substrate binding. Positions 35–38 (DSQQ) are interaction with substrate tRNA.

Belongs to the IPP transferase family. In terms of assembly, monomer. It depends on Mg(2+) as a cofactor.

It carries out the reaction adenosine(37) in tRNA + dimethylallyl diphosphate = N(6)-dimethylallyladenosine(37) in tRNA + diphosphate. In terms of biological role, catalyzes the transfer of a dimethylallyl group onto the adenine at position 37 in tRNAs that read codons beginning with uridine, leading to the formation of N6-(dimethylallyl)adenosine (i(6)A). The sequence is that of tRNA dimethylallyltransferase from Streptococcus pneumoniae serotype 19F (strain G54).